The chain runs to 227 residues: 2,3-bisphosphoglycerate-dependent phosphoglycerate mutase (227 aa).

Substrate is bound by residues 7 to 14 (RHGFSEWN), 20 to 21 (TG), Arg59, 86 to 89 (ERHY), Lys97, 113 to 114 (RR), and 182 to 183 (GN). The Tele-phosphohistidine intermediate role is filled by His8. The active-site Proton donor/acceptor is Glu86.

The protein belongs to the phosphoglycerate mutase family. BPG-dependent PGAM subfamily. In terms of assembly, homodimer.

The catalysed reaction is (2R)-2-phosphoglycerate = (2R)-3-phosphoglycerate. The protein operates within carbohydrate degradation; glycolysis; pyruvate from D-glyceraldehyde 3-phosphate: step 3/5. Its function is as follows. Catalyzes the interconversion of 2-phosphoglycerate and 3-phosphoglycerate. The polypeptide is 2,3-bisphosphoglycerate-dependent phosphoglycerate mutase (Haemophilus influenzae (strain PittGG)).